We begin with the raw amino-acid sequence, 271 residues long: Putative phosphoenolpyruvate synthase regulatory protein (271 aa).

Residue 151–158 (GVSRSGKT) participates in ADP binding.

This sequence belongs to the pyruvate, phosphate/water dikinase regulatory protein family. PSRP subfamily.

It catalyses the reaction [pyruvate, water dikinase] + ADP = [pyruvate, water dikinase]-phosphate + AMP + H(+). The enzyme catalyses [pyruvate, water dikinase]-phosphate + phosphate + H(+) = [pyruvate, water dikinase] + diphosphate. Its function is as follows. Bifunctional serine/threonine kinase and phosphorylase involved in the regulation of the phosphoenolpyruvate synthase (PEPS) by catalyzing its phosphorylation/dephosphorylation. The polypeptide is Putative phosphoenolpyruvate synthase regulatory protein (Burkholderia ambifaria (strain MC40-6)).